A 255-amino-acid chain; its full sequence is MIPVERRQIILEMVAEKGIVSIAELTDRMNVSHMTIRRDLQKLEQQGAVVLVSGGVQSPGRVAHEPSHQVKTALAMTQKAAIGKLAASLVQPGSCIYLDAGTTTLAIAQHLIHMESLTVVTNDFVIADYLLDNSNCTIIHTGGAVCRENRSCVGEAAATMLRSLMIDQAFISASSWSVRGISTPAEDKVTVKRAIASASRQRVLVCDATKYGQVATWLALPLSEFDQIITDDGLPESASRALVKQDLSLLVAKNE.

The HTH deoR-type domain maps to 3–58; the sequence is PVERRQIILEMVAEKGIVSIAELTDRMNVSHMTIRRDLQKLEQQGAVVLVSGGVQS. A DNA-binding region (H-T-H motif) is located at residues 20–39; sequence VSIAELTDRMNVSHMTIRRD.

This is an uncharacterized protein from Escherichia coli (strain K12).